The following is a 562-amino-acid chain: DNA ligase (562 aa).

E250 lines the ATP pocket. The N6-AMP-lysine intermediate role is filled by K252. ATP is bound by residues R257, R272, E302, F342, R417, and K423.

It belongs to the ATP-dependent DNA ligase family. The cofactor is Mg(2+). Requires Zn(2+) as cofactor.

The catalysed reaction is ATP + (deoxyribonucleotide)n-3'-hydroxyl + 5'-phospho-(deoxyribonucleotide)m = (deoxyribonucleotide)n+m + AMP + diphosphate.. It carries out the reaction NAD(+) + (deoxyribonucleotide)n-3'-hydroxyl + 5'-phospho-(deoxyribonucleotide)m = (deoxyribonucleotide)n+m + AMP + beta-nicotinamide D-nucleotide.. Its function is as follows. DNA ligase that seals nicks in double-stranded DNA during DNA replication, DNA recombination and DNA repair. Can use both ATP and NAD(+), but NAD(+) may be a preferred nucleotide cofactor. This Thermococcus onnurineus (strain NA1) protein is DNA ligase.